The following is a 409-amino-acid chain: POU domain, class 4, transcription factor 2 (409 aa).

The segment at 26–93 (YSALHSTSPG…SEAMRRACLP (68 aa)) is disordered. The span at 31-52 (STSPGSSAPIAPSASSPSSSSN) shows a compositional bias: low complexity. Residues 53–69 (AGGGGGGGGGGGGGGGR) are compositionally biased toward gly residues. The segment at 91-237 (CLPTPPSNIF…MHQAALSMAH (147 aa)) is required for transcriptional activation. A POU-IV box motif is present at residues 110-119 (RAEALAAVDI). Low complexity predominate over residues 153–166 (AASSSSVPISHPSA). Residues 153 to 188 (AASSSSVPISHPSALAGTHHHHHHHHHHHHQPHQAL) form a disordered region. The segment covering 170-184 (THHHHHHHHHHHHQP) has biased composition (basic residues). A Nuclear speckle targeting signal motif is present at residues 171-185 (HHHHHHHHHHHHQPH). A required for DNA-binding and transcriptional repression region spans residues 238-409 (AHGLPSHMGC…QKRMKYSAGI (172 aa)). One can recognise a POU-specific domain in the interval 250–327 (DVDADPRDLE…ILQAWLEEAE (78 aa)). Positions 345-404 (KKRKRTSIAAPEKRSLEAYFAIQPRPSSEKIAAIAEKLDLKKNVVRVWFCNQRQKQKRMK) form a DNA-binding region, homeobox.

It belongs to the POU transcription factor family. Class-4 subfamily. As to quaternary structure, interacts with POU4F1; this interaction inhibits both POU4F1 DNA-binding and transcriptional activities. Interacts (C-terminus) with ESR1 (via DNA-binding domain); this interaction increases the estrogen receptor ESR1 transcriptional activity in a DNA- and ligand 17-beta-estradiol-independent manner. Interacts (via C-terminus) with TP53 (via N-terminus). Interacts with DLX1 (via homeobox DNA-binding domain); this interaction suppresses DLX1-mediated transcriptional activity in postnatal retina enhancing retinal ganglion cell (RGC) differentiation. Interacts with DLX2 (via homeobox DNA-binding domain); this interaction enhances RGC differentiation. Interacts (via C-terminus) with ISL1 (via C-terminus). Interacts with ISL2. Interacts with LHX2. Expressed in the brain. Expressed in the ganglion cell layer of the retina.

The protein resides in the nucleus. It localises to the nucleus speckle. It is found in the cytoplasm. Its function is as follows. Tissue-specific DNA-binding transcription factor involved in the development and differentiation of target cells. Functions either as activator or repressor modulating the rate of target gene transcription through RNA polymerase II enzyme in a promoter-dependent manner. Binds to the consensus octamer motif 5'-AT[A/T]A[T/A]T[A/T]A-3' of promoter of target genes. Plays a fundamental role in the gene regulatory network essential for retinal ganglion cell (RGC) differentiation. Binds to an octamer site to form a ternary complex with ISL1; cooperates positively with ISL1 and ISL2 to potentiate transcriptional activation of RGC target genes being involved in RGC fate commitment in the developing retina and RGC axon formation and pathfinding. Inhibits DLX1 and DLX2 transcriptional activities preventing DLX1- and DLX2-mediated ability to promote amacrine cell fate specification. In cooperation with TP53 potentiates transcriptional activation of BAX promoter activity increasing neuronal cell apoptosis. Negatively regulates BAX promoter activity in the absence of TP53. Acts as a transcriptional coactivator via its interaction with the transcription factor ESR1 by enhancing its effect on estrogen response element (ERE)-containing promoter. Antagonizes the transcriptional stimulatory activity of POU4F1 by preventing its binding to an octamer motif. Involved in TNFSF11-mediated terminal osteoclast differentiation. The protein is POU domain, class 4, transcription factor 2 of Homo sapiens (Human).